Consider the following 514-residue polypeptide: Na(+)/H(+) antiporter NhaB (514 aa).

The next 11 membrane-spanning stretches (helical) occupy residues 21–41 (LAIV…SPFI), 43–63 (GWLL…CYPL), 88–108 (IMAN…IFFM), 143–163 (FLDA…FYGV), 203–223 (LMMH…VGEP), 239–259 (FFLR…LTCF), 304–324 (ALIA…VGLI), 349–369 (QESL…AVII), 390–410 (LALF…VFVA), 448–468 (ATPN…SPLI), and 484–504 (IVLS…ATIW).

It belongs to the NhaB Na(+)/H(+) (TC 2.A.34) antiporter family.

It is found in the cell inner membrane. It catalyses the reaction 2 Na(+)(in) + 3 H(+)(out) = 2 Na(+)(out) + 3 H(+)(in). Functionally, na(+)/H(+) antiporter that extrudes sodium in exchange for external protons. This is Na(+)/H(+) antiporter NhaB from Haemophilus influenzae (strain 86-028NP).